Reading from the N-terminus, the 278-residue chain is Myb/SANT-like DNA-binding domain-containing protein 1 (278 aa).

In terms of domain architecture, Myb-like spans 44–131 (RNWTDAEMRG…WPYYLAIDRI (88 aa)). The disordered stretch occupies residues 139–167 (CEGKLPDGQQPGPSTSQTEASLSPSAKST). Over residues 149–166 (PGPSTSQTEASLSPSAKS) the composition is skewed to polar residues.

The chain is Myb/SANT-like DNA-binding domain-containing protein 1 (Msantd1) from Mus musculus (Mouse).